Here is a 90-residue protein sequence, read N- to C-terminus: Small ribosomal subunit protein uS15c (90 aa).

Belongs to the universal ribosomal protein uS15 family. As to quaternary structure, part of the 30S ribosomal subunit.

It localises to the plastid. The protein resides in the chloroplast. The polypeptide is Small ribosomal subunit protein uS15c (rps15-A) (Hordeum vulgare (Barley)).